The primary structure comprises 468 residues: Nicotinamide phosphoribosyltransferase (468 aa).

Arginine 180 is a diphosphate binding site. Aspartate 203 provides a ligand contact to beta-nicotinamide D-ribonucleotide. 2 residues coordinate diphosphate: histidine 229 and arginine 293. The residue at position 229 (histidine 229) is a Phosphohistidine; by autocatalysis. Beta-nicotinamide D-ribonucleotide-binding residues include aspartate 335 and arginine 373.

This sequence belongs to the NAPRTase family. Homodimer. The dimeric structure consists of two protomers arranged head to tail, with domain A on one protomer interacting with domain B on the other protomer. Post-translationally, phosphorylation at His-229 plays a crucial role in enhancing the substrate affinity and is important for maintaining enzymatic activity.

The enzyme catalyses beta-nicotinamide D-ribonucleotide + diphosphate = 5-phospho-alpha-D-ribose 1-diphosphate + nicotinamide + H(+). The protein operates within cofactor biosynthesis; NAD(+) biosynthesis; nicotinamide D-ribonucleotide from 5-phospho-alpha-D-ribose 1-diphosphate and nicotinamide: step 1/1. ATP-dependent autophosphorylation plays a vital role in nicotinamide binding and enzyme activation. Activity is inhibited by FK866. In terms of biological role, catalyzes the condensation of nicotinamide with 5-phosphoribosyl-1-pyrophosphate to yield nicotinamide mononucleotide, an intermediate in the biosynthesis of NAD. Plays an important role in the biosynthesis of NAD via the nicotinamide (NAM) salvage pathway. Is also capable of hydrolyzing ATP and shows ATP-dependent autophosphorylation activity. This chain is Nicotinamide phosphoribosyltransferase, found in Xanthomonas campestris pv. campestris (strain 8004).